A 417-amino-acid polypeptide reads, in one-letter code: NADH-quinone oxidoreductase subunit F (417 aa).

54 to 63 (GRGGAGFSTG) provides a ligand contact to NAD(+). FMN is bound at residue 166 to 213 (GAGAYICGEETALLESLEGKKGMPRLKPPFPAGFGLYGCPTTINNVES). [4Fe-4S] cluster is bound by residues Cys-345, Cys-348, Cys-351, and Cys-391.

This sequence belongs to the complex I 51 kDa subunit family. FMN serves as cofactor. It depends on [4Fe-4S] cluster as a cofactor.

It carries out the reaction a quinone + NADH + 5 H(+)(in) = a quinol + NAD(+) + 4 H(+)(out). In terms of biological role, NDH-1 shuttles electrons from NADH, via FMN and iron-sulfur (Fe-S) centers, to quinones in the respiratory chain. Couples the redox reaction to proton translocation (for every two electrons transferred, four hydrogen ions are translocated across the cytoplasmic membrane), and thus conserves the redox energy in a proton gradient. The sequence is that of NADH-quinone oxidoreductase subunit F (nuoF) from Rickettsia bellii (strain OSU 85-389).